The primary structure comprises 408 residues: Argininosuccinate synthase (408 aa).

Residues 12–20 (AYSGGLDTS) and Ala-39 contribute to the ATP site. The L-citrulline site is built by Tyr-90 and Ser-95. Gly-120 is an ATP binding site. Residues Thr-122, Asn-126, and Asp-127 each contribute to the L-aspartate site. Asn-126 contacts L-citrulline. Residues Arg-130, Ser-181, Ser-190, Glu-266, and Tyr-278 each coordinate L-citrulline.

Belongs to the argininosuccinate synthase family. Type 1 subfamily. As to quaternary structure, homotetramer.

Its subcellular location is the cytoplasm. It catalyses the reaction L-citrulline + L-aspartate + ATP = 2-(N(omega)-L-arginino)succinate + AMP + diphosphate + H(+). The protein operates within amino-acid biosynthesis; L-arginine biosynthesis; L-arginine from L-ornithine and carbamoyl phosphate: step 2/3. This chain is Argininosuccinate synthase, found in Methylococcus capsulatus (strain ATCC 33009 / NCIMB 11132 / Bath).